Here is a 1678-residue protein sequence, read N- to C-terminus: MSRLQPQQQQRGRSSSFKDNFQIQKPLQSLTPSEQQQQQQQQQQQQQQQQQQQQQQQQQNNANNNNNNNNNKFNNQYIQQMKNVENDIKKWIGEKCSSSLSDDFLEKDLMESLCTGTILCVLINMIKQGTIQKIHLQPNYLQRVENIRNYLRACWLFGLHSKYFFPSSYLLSMTIENNDNSNSSKTTTNNNNNNNNNNNNNNNNNNNNNNNNNNRAIITSPNKNGGVNTMIVNLEYKEKIMINLTELCKISLKIKNFGSFLQLSSSSSSTPPPPINNNNNNNNNNNNNNNNNNDLLISNNSSNISSPNSFSDSPMGFSSSINSSSNNSNLNTPNNYNNTNNNNNNNNNNNNNNNNNINNLTPQMIISSPTSTSSTPPLPPCANNINNNNLKKRTKIPKNNNNNNNNNNNNNNNNNNNNNNNNNNNNNNKIIIKRDCKKVYRKRKSSNCDNDDNGSNSDSDSSDSSDSSDSDSDSLLSSDGTPIILSQSSNPESVSFKSFIKEILHLKNIISKQDKTITSQKQTIETLEKDLEFQKQLTKKLLSSPIDLSNFIETSSDPNGAIPVSIQAFTRQIQQIQTLQQQNLSLETELSKTNEHLSTNIRKNSKLENEVLSIETELLNLRMKYANTLSSSNSNGNNNSNNNSLGCNNSINGSSSGGGGNNSSTSKGTLSRTISQPFPLRKSISHSNIITSPVNSHQQQQQQNQLSQSQTTSPKNTSASYNNGILSKSSIVSNTNTNSTYKFGSSTGILKVSATLQQKQQQQQQQQNQQQQQNQQQQQQNQQQQNQQQQNQQKQNQQQQNQQQQQQQQQQQQQNQQQQQQQQQQQQQQQQQQNQQQQQNNQLSQSQQLQQQQNQQINNLIDSPLIISNSSNQQIESESIESDSDYDKDMVDFGKKIVSALISSSNHVEMSEIYKMNDILTNETSRRQICIVLEEETKINQLKLPMNENSFEVTLYLVNTILQCIHEAPSKDYFSLKLIMESSRILNRKKVNGSCEFIQEFIKDHPTWKDIKFWEEQYWDELIIKHQQFSGSGSSSSSNTGGSIVTTMTTTTTVTSAITSSSSTTSDDFDVDYTELVNTLLISYVYNLASWGLSKSDVKEFTISMSKKSFLKSNELEKLIEQVTSTVELSFTSDHNVCKGPHSFVLKSFRIISECNYCRQYIWGVRGIVAREAFECVGCKYKTHKKCLKEASEKTFCSSPNVGAPFNVKHEMHVGLAIQGLPSGWRTLLLQSGFQDYEIQQHQEDVLDVLEFHHVYNEKQQNSIKLLTNNSNNNNNNNNSNNNLQQQQQQNQQLKQKLNITNNQQNNTIININITSPSISVNNNTYNNNNNNNNNNEINPSSPNNNNNYYDSLLEIEEPSFTLKDLVSLENPIDLYKVREVVGGGSTGKVYVGENSITGEKVAIKKMKVDNNNIKNIINEISTMKNSKHKNVIKYVSSHLVINHIWLIMEYMSYGSLTDLISNCINIQCNGNNQQQQQQQQQQQTYFIESHIAYICQQVLQGMDYIHKGHRTHRDIKSDNILLGKDGSVKIADFGFVANLTRKKLQRNSVVGTPYFMAPELIRGNQYNHKVDIWSLGILARELSEGEPPYAKYPPVRALFLLTLEGVPDFKEPNKWSSDFIEFVNLCLNLDDKRRPDAHYLLRHPFLKKACSSREFADKVEEIYNTRKNQFSDINFNF.

Residues 1–15 (MSRLQPQQQQRGRSS) are compositionally biased toward low complexity. Disordered stretches follow at residues 1 to 73 (MSRL…NNKF), 180 to 224 (NSNS…PNKN), 262 to 428 (QLSS…NNNN), and 442 to 489 (KRKS…SQSS). Residues 17-34 (FKDNFQIQKPLQSLTPSE) show a composition bias toward polar residues. Composition is skewed to low complexity over residues 35–73 (QQQQ…NNKF) and 180–214 (NSNS…NNNN). Residues 82 to 189 (KNVENDIKKW…NSNSSKTTTN (108 aa)) form the Calponin-homology (CH) domain. Over residues 215-224 (RAIITSPNKN) the composition is skewed to polar residues. Low complexity-rich tracts occupy residues 276–359 (NNNN…NINN) and 399–428 (NNNN…NNNN). Over residues 460-472 (DSSDSSDSSDSDS) the composition is skewed to acidic residues. 2 coiled-coil regions span residues 512–542 (KQDK…KKLL) and 570–628 (TRQI…YANT). Composition is skewed to low complexity over residues 631–654 (SSNS…INGS), 662–671 (NSSTSKGTLS), and 695–713 (NSHQ…QTTS). 2 disordered regions span residues 631 to 672 (SSNS…TLSR) and 693 to 722 (PVNS…ASYN). Residues 752-862 (VSATLQQKQQ…QNQQINNLID (111 aa)) are a coiled coil. The Phorbol-ester/DAG-type zinc finger occupies 1141–1197 (PHSFVLKSFRIISECNYCRQYIWGVRGIVAREAFECVGCKYKTHKKCLKEASEKTFC). One can recognise a CRIB domain in the interval 1202-1215 (VGAPFNVKHEMHVG). 2 disordered regions span residues 1267 to 1292 (LTNN…QQNQ) and 1323 to 1346 (NNTY…PNNN). Positions 1269–1309 (NNSNNNNNNNNSNNNLQQQQQQNQQLKQKLNITNNQQNNTI) form a coiled coil. In terms of domain architecture, Protein kinase spans 1376 to 1647 (YKVREVVGGG…AHYLLRHPFL (272 aa)). ATP contacts are provided by residues 1382–1390 (VGGGSTGKV) and lysine 1405. Aspartate 1515 (proton acceptor) is an active-site residue.

This sequence belongs to the protein kinase superfamily. STE Ser/Thr protein kinase family. STE20 subfamily. Requires Mg(2+) as cofactor.

It catalyses the reaction L-seryl-[protein] + ATP = O-phospho-L-seryl-[protein] + ADP + H(+). The catalysed reaction is L-threonyl-[protein] + ATP = O-phospho-L-threonyl-[protein] + ADP + H(+). The polypeptide is Serine/threonine-protein kinase pakD (Dictyostelium discoideum (Social amoeba)).